Reading from the N-terminus, the 37-residue chain is L-amino-acid oxidase (37 aa).

It belongs to the flavin monoamine oxidase family. FIG1 subfamily. Homodimer; non-covalently linked. The cofactor is FAD. Post-translationally, N-Glycosylated. In terms of tissue distribution, expressed by the venom gland.

It is found in the secreted. It catalyses the reaction an L-alpha-amino acid + O2 + H2O = a 2-oxocarboxylate + H2O2 + NH4(+). The enzyme catalyses L-leucine + O2 + H2O = 4-methyl-2-oxopentanoate + H2O2 + NH4(+). The catalysed reaction is L-phenylalanine + O2 + H2O = 3-phenylpyruvate + H2O2 + NH4(+). It carries out the reaction L-tryptophan + O2 + H2O = indole-3-pyruvate + H2O2 + NH4(+). It catalyses the reaction L-methionine + O2 + H2O = 4-methylsulfanyl-2-oxobutanoate + H2O2 + NH4(+). The enzyme catalyses L-isoleucine + O2 + H2O = (S)-3-methyl-2-oxopentanoate + H2O2 + NH4(+). The catalysed reaction is L-arginine + O2 + H2O = 5-guanidino-2-oxopentanoate + H2O2 + NH4(+). It carries out the reaction L-histidine + O2 + H2O = 3-(imidazol-5-yl)pyruvate + H2O2 + NH4(+). It catalyses the reaction L-valine + O2 + H2O = 3-methyl-2-oxobutanoate + H2O2 + NH4(+). Its function is as follows. Catalyzes an oxidative deamination of predominantly hydrophobic and aromatic L-amino acids, thus producing hydrogen peroxide that may contribute to the diverse toxic effects of this enzyme. Is highly active on L-Leu, L-Met, moderately active on L-Arg, L-Trp, L-Phe, L-Val, L-His, and L-Ile, and is weakly or not active on L-Cys, L-Lys, L-Ala, L-Thr, L-Asp, L-Ser, and L-Pro. Exhibits diverse biological activities, such as hemorrhage, edema, apoptosis of vascular endothelial cells or tumor cell lines, as well as regulation of platelet aggregation. Effects of snake L-amino oxidases on platelets are controversial, since they either induce aggregation or inhibit agonist-induced aggregation. These different effects are probably due to different experimental conditions. This protein induce hemolysis and has antibacterial and antiparasitic activities (against the Gram-positive S.aureus). Tested in vivo, this protein significantly inhibits Ehrlich ascite tumors growth and induces an influx of polymorphonuclear cells, as well as spontaneous liberation of hydrogen peroxide from peritoneal macrophages. This chain is L-amino-acid oxidase, found in Bothrops jararaca (Jararaca).